A 251-amino-acid chain; its full sequence is Adenylate kinase (251 aa).

An ATP-binding site is contributed by 46–51 (GAGKGT). The tract at residues 66-95 (ATGDMLRSQVQQQTPLGVEAKKIMDAGGLV) is NMP. AMP contacts are provided by residues Thr-67, Arg-72, 93 to 95 (GLV), 122 to 125 (GFPR), and Gln-129. Residues 163-200 (GRLVHPASGRSYHKVFNPPKKEMIDDITGEALVQRSDD) are LID. ATP is bound by residues Arg-164 and 173–174 (SY). Positions 197 and 208 each coordinate AMP. Residue Gln-236 coordinates ATP.

It belongs to the adenylate kinase family. AK2 subfamily. In terms of assembly, monomer.

It is found in the cytoplasm. The protein localises to the cytosol. Its subcellular location is the mitochondrion intermembrane space. The enzyme catalyses AMP + ATP = 2 ADP. Functionally, catalyzes the reversible transfer of the terminal phosphate group between ATP and AMP. Plays an important role in cellular energy homeostasis and in adenine nucleotide metabolism. Adenylate kinase activity is critical for regulation of the phosphate utilization and the AMP de novo biosynthesis pathways. This chain is Adenylate kinase, found in Yarrowia lipolytica (strain CLIB 122 / E 150) (Yeast).